We begin with the raw amino-acid sequence, 476 residues long: MYFQKKETFFMPLTKDTLTFECETGNYHTFCPISCVAWLYQKIEDSFFLVVGTKTCGYFLQNALGVMIFAEPRYAMAELEEGDISAQLNDYEELKRLCSQIKKDRNPSVIVWIGTCTTEIIKMDLEGMAPRLEAEIDIPIVVARANGLDYAFTQGEDTVLAAMAHRCPDINSVTQNINIEDNGRERLLSFLPSKEKASNERKNESTHPPLVLFGSLPSNVTSQLTLELKKQNIDVSGWLPSQRYAELPSVGEGVYVCGVNPFLSRTATTLMRRRKCKLIGAPFPIGPDGTRAWIEKICSVFGIQPIGLEEREKQIWNSLQDYLNLVRGKSVFFMGDNLLEISLARFLIRCGMIVYEIGIPYMDKRYQAAELALLEKTCQEMNVSLPRIVEKPDNYNQVQRMRELQPDLAITGMAHANPLEARGISTKWSVEFTFAQIHGFTNARDILELVTRPLRRNLSLEQLGWTGLVKRNKLTA.

The [4Fe-4S] cluster site is built by cysteine 31, cysteine 56, and cysteine 116.

This sequence belongs to the BchN/ChlN family. Protochlorophyllide reductase is composed of three subunits; ChlL, ChlN and ChlB. Forms a heterotetramer of two ChlB and two ChlN subunits. The cofactor is [4Fe-4S] cluster.

Its subcellular location is the plastid. It is found in the chloroplast. It carries out the reaction chlorophyllide a + oxidized 2[4Fe-4S]-[ferredoxin] + 2 ADP + 2 phosphate = protochlorophyllide a + reduced 2[4Fe-4S]-[ferredoxin] + 2 ATP + 2 H2O. The protein operates within porphyrin-containing compound metabolism; chlorophyll biosynthesis (light-independent). In terms of biological role, component of the dark-operative protochlorophyllide reductase (DPOR) that uses Mg-ATP and reduced ferredoxin to reduce ring D of protochlorophyllide (Pchlide) to form chlorophyllide a (Chlide). This reaction is light-independent. The NB-protein (ChlN-ChlB) is the catalytic component of the complex. The protein is Light-independent protochlorophyllide reductase subunit N of Staurastrum punctulatum (Green alga).